A 164-amino-acid chain; its full sequence is Transcription antitermination protein NusB (164 aa).

It belongs to the NusB family.

In terms of biological role, involved in transcription antitermination. Required for transcription of ribosomal RNA (rRNA) genes. Binds specifically to the boxA antiterminator sequence of the ribosomal RNA (rrn) operons. This Chlorobium limicola (strain DSM 245 / NBRC 103803 / 6330) protein is Transcription antitermination protein NusB.